The following is a 126-amino-acid chain: Putative esterase ComA2 (126 aa).

It belongs to the thioesterase PaaI family.

Its function is as follows. Is not required for competence. The polypeptide is Putative esterase ComA2 (yuxO) (Bacillus subtilis (strain 168)).